Reading from the N-terminus, the 120-residue chain is MFPGMGGVGGRGMNPAKMKQMMKQMGIDVKELKDVEEVVIKTADSNIVIENANVTIMTVQGSETYQIVGDVKEVPKSLEIPAEDIKLVMEQTGVSEEEARNALKNSNGDLAEAIVALSSA.

Residues 12–80 (GMNPAKMKQM…VKEVPKSLEI (69 aa)) form the NAC-A/B domain.

It belongs to the NAC-alpha family. As to quaternary structure, homodimer. Interacts with the ribosome. Binds ribosomal RNA.

Functionally, contacts the emerging nascent chain on the ribosome. The protein is Nascent polypeptide-associated complex protein of Methanosarcina mazei (strain ATCC BAA-159 / DSM 3647 / Goe1 / Go1 / JCM 11833 / OCM 88) (Methanosarcina frisia).